A 267-amino-acid polypeptide reads, in one-letter code: Glutamate racemase (267 aa).

Substrate-binding positions include aspartate 9 to serine 10 and tyrosine 41 to serine 42. The Proton donor/acceptor role is filled by cysteine 73. Asparagine 74–threonine 75 is a binding site for substrate. Cysteine 184 serves as the catalytic Proton donor/acceptor. Residue threonine 185–histidine 186 participates in substrate binding.

Belongs to the aspartate/glutamate racemases family.

The enzyme catalyses L-glutamate = D-glutamate. It participates in cell wall biogenesis; peptidoglycan biosynthesis. Provides the (R)-glutamate required for cell wall biosynthesis. The protein is Glutamate racemase of Actinobacillus pleuropneumoniae serotype 7 (strain AP76).